The primary structure comprises 974 residues: MATFAVSGLNSISSISSFNNNFRSKNSNILLSRRRILLFSFRRRRRSFSVSSVASDQKQKTKDSSSDEGFTLDVFQPDSTSVLSSIKYHAEFTPSFSPEKFELPKAYYATAESVRDTLIINWNATYEFYEKMNVKQAYYLSMEFLQGRALLNAIGNLGLTGPYADALTKLGYSLEDVARQEPDAALGNGGLGRLASCFLDSMATLNYPAWGYGLRYQYGLFKQLITKDGQEEVAENWLEMGNPWEIVRNDISYPVKFYGKVIEGADGRKEWAGGEDITAVAYDVPIPGYKTKTTINLRLWTTKLAAEAFDLYAFNNGDHAKAYEAQKKAEKICYVLYPGDESLEGKTLRLKQQYTLCSASLQDIIARFEKRSGNAVNWDQFPEKVAVQMNDTHPTLCIPELLRILMDVKGLSWKQAWEITQRTVAYTNHTVLPEALEKWSFTLLGELLPRHVEIIAMIDEELLHTILAEYGTEDLDLLQEKLNQMRILDNVEIPSSVLELLIKAEESAADVEKAADEEQEEEGKDDSKDEETEAVKAETTNEEEETEVKKVEVEDSQAKIKRIFGPHPNKPQVVHMANLCVVSGHAVNGVAEIHSEIVKDEVFNEFYKLWPEKFQNKTNGVTPRRWLSFCNPELSEIITKWTGSDDWLVNTEKLAELRKFADNEELQSEWRKAKGNNKMKIVSLIKEKTGYVVSPDAMFDVQIKRIHEYKRQLLNIFGIVYRYKKMKEMSPEERKEKFVPRVCIFGGKAFATYVQAKRIVKFITDVGETVNHDPEIGDLLKVVFVPDYNVSVAEVLIPGSELSQHISTAGMEASGTSNMKFSMNGCLLIGTLDGANVEIREEVGEDNFFLFGAQAHEIAGLRKERAEGKFVPDPRFEEVKAFIRTGVFGTYNYEELMGSLEGNEGYGRADYFLVGKDFPDYIECQDKVDEAYRDQKKWTKMSILNTAGSFKFSSDRTIHQYARDIWRIEPVELP.

The transit peptide at Met1 to Ser81 directs the protein to the chloroplast. A disordered region spans residues Ala509 to Val551. Acidic residues predominate over residues Glu517–Thr532. Lys820 carries the post-translational modification N6-(pyridoxal phosphate)lysine.

The protein belongs to the glycogen phosphorylase family. Pyridoxal 5'-phosphate is required as a cofactor. Leaves.

It localises to the plastid. The protein resides in the chloroplast. Its subcellular location is the amyloplast. It carries out the reaction [(1-&gt;4)-alpha-D-glucosyl](n) + phosphate = [(1-&gt;4)-alpha-D-glucosyl](n-1) + alpha-D-glucose 1-phosphate. Its function is as follows. Phosphorylase is an important allosteric enzyme in carbohydrate metabolism. Enzymes from different sources differ in their regulatory mechanisms and in their natural substrates. However, all known phosphorylases share catalytic and structural properties. This chain is Alpha-1,4 glucan phosphorylase L-2 isozyme, chloroplastic/amyloplastic (STP-1), found in Solanum tuberosum (Potato).